A 168-amino-acid polypeptide reads, in one-letter code: uncharacterized protein (168 aa).

A helical transmembrane segment spans residues 24-44; the sequence is FIGIVLFLAVLIIGILILILF. Disordered stretches follow at residues 69-92 and 142-168; these read SPSS…NNSN and NNNN…TKNI. A compositionally biased stretch (low complexity) spans 142-157; the sequence is NNNNNNNNNPPTNISN.

It localises to the membrane. This is an uncharacterized protein from Dictyostelium discoideum (Social amoeba).